The following is an 82-amino-acid chain: uncharacterized protein (82 aa).

In terms of domain architecture, 2Fe-2S ferredoxin-type spans 1–82 (MKIHLIRHNT…HVESDIEIDL (82 aa)). [2Fe-2S] cluster is bound by residues cysteine 35, cysteine 40, cysteine 43, and cysteine 72.

Requires [2Fe-2S] cluster as cofactor.

This is an uncharacterized protein from Haemophilus influenzae (strain ATCC 51907 / DSM 11121 / KW20 / Rd).